The primary structure comprises 204 residues: 3,4-dihydroxy-2-butanone 4-phosphate synthase (204 aa).

E27 provides a ligand contact to Mg(2+). Position 31 (D31) interacts with D-ribulose 5-phosphate. S-glutathionyl cysteine is present on C56. D-ribulose 5-phosphate is bound by residues T82 and 140–144; that span reads RDGHT. H143 lines the Mg(2+) pocket.

This sequence belongs to the DHBP synthase family. As to quaternary structure, homodimer. Requires Mg(2+) as cofactor. Mn(2+) serves as cofactor. In terms of processing, S-glutathionylation is reversible and dependent on a glutaredoxin.

The enzyme catalyses D-ribulose 5-phosphate = (2S)-2-hydroxy-3-oxobutyl phosphate + formate + H(+). The protein operates within cofactor biosynthesis; riboflavin biosynthesis; 2-hydroxy-3-oxobutyl phosphate from D-ribulose 5-phosphate: step 1/1. In terms of biological role, catalyzes the conversion of D-ribulose 5-phosphate to formate and 3,4-dihydroxy-2-butanone 4-phosphate. This chain is 3,4-dihydroxy-2-butanone 4-phosphate synthase, found in Schizosaccharomyces pombe (strain 972 / ATCC 24843) (Fission yeast).